The following is a 585-amino-acid chain: Protein FAM83D (585 aa).

Residues 1 to 296 (MAARFELLDD…LYAQSEPISS (296 aa)) form a DUF1669 region. At serine 295 the chain carries Phosphoserine. 2 disordered regions span residues 334–411 (LSST…TSSS) and 425–482 (AASS…SQGS). The tract at residues 337–585 (TPRKSNLGPE…RDIALYPPYQ (249 aa)) is required for interaction with KIF22 and function in chromosome congression. Basic and acidic residues-rich tracts occupy residues 347–360 (EPPK…RPDS) and 369–383 (DYFH…DSKV). Over residues 425–441 (AASSQATVWSKSTTTQT) the composition is skewed to polar residues. Phosphoserine is present on serine 458. Low complexity predominate over residues 458 to 482 (SPASKMSVSRSSSVRSSSSVSSQGS). Threonine 511 bears the Phosphothreonine mark.

The protein belongs to the FAM83 family. As to quaternary structure, interacts with FBXW7; promotes FBXW7 degradation. May interact with RAF1. Interacts with KIF22; recruits KIF22 to mitotic spindle microtubules. Interacts (via C-terminus) with DYNLL1. Interacts with HMMR. Directly interacts (via DUF1669) with CSNK1A1 and CSNK1A1L. Post-translationally, phosphorylated during mitosis.

Its subcellular location is the cytoplasm. It is found in the cytoskeleton. The protein localises to the spindle. It localises to the spindle pole. Its function is as follows. Through the degradation of FBXW7, may act indirectly on the expression and downstream signaling of MTOR, JUN and MYC. May play also a role in cell proliferation through activation of the ERK1/ERK2 signaling cascade. May also be important for proper chromosome congression and alignment during mitosis through its interaction with KIF22. The sequence is that of Protein FAM83D from Mus musculus (Mouse).